The chain runs to 435 residues: UPF0597 protein AHA_4077 (435 aa).

Belongs to the UPF0597 family.

In Aeromonas hydrophila subsp. hydrophila (strain ATCC 7966 / DSM 30187 / BCRC 13018 / CCUG 14551 / JCM 1027 / KCTC 2358 / NCIMB 9240 / NCTC 8049), this protein is UPF0597 protein AHA_4077.